Consider the following 83-residue polypeptide: Cytochrome c5 (83 aa).

Cys15, Cys18, His19, and Met59 together coordinate heme c. An intrachain disulfide couples Cys65 to Cys68.

This sequence belongs to the cytochrome c family. In terms of assembly, homodimer. Binds 1 heme c group covalently per subunit.

Its function is as follows. It is unreactive with cytochrome c reductase or oxidase. The protein is Cytochrome c5 of Azotobacter vinelandii.